Here is a 373-residue protein sequence, read N- to C-terminus: Putative glutamate--cysteine ligase 2 (373 aa).

The protein belongs to the glutamate--cysteine ligase type 2 family. YbdK subfamily. In terms of assembly, homodimer.

It catalyses the reaction L-cysteine + L-glutamate + ATP = gamma-L-glutamyl-L-cysteine + ADP + phosphate + H(+). In terms of biological role, ATP-dependent carboxylate-amine ligase which exhibits weak glutamate--cysteine ligase activity. The sequence is that of Putative glutamate--cysteine ligase 2 from Enterobacter sp. (strain 638).